Consider the following 579-residue polypeptide: Glutamine--tRNA ligase (579 aa).

The 'HIGH' region signature appears at 41–51; it reads PEPNGYLHIGH. Residues 42–44 and 48–54 each bind ATP; these read EPN and HIGHAKA. L-glutamine contacts are provided by Asp74 and Tyr218. ATP-binding positions include Thr237, 285–286, and 293–295; these read RL and MSK. The 'KMSKS' region signature appears at 292–296; sequence VMSKR.

The protein belongs to the class-I aminoacyl-tRNA synthetase family. In terms of assembly, monomer.

It localises to the cytoplasm. The enzyme catalyses tRNA(Gln) + L-glutamine + ATP = L-glutaminyl-tRNA(Gln) + AMP + diphosphate. This chain is Glutamine--tRNA ligase, found in Xanthomonas campestris pv. campestris (strain 8004).